The primary structure comprises 672 residues: MVKTALEEFAFLIPLLPALAFAITFFFGRKMPSGGAIVPILAIAASFVISFAITLGLLANPEEVISQSYSWFAVLNIGILIDPLAAVMLSMVSFVSLLIHIYAVSYMSHDAGKARYFAETALFTAAMLSLVLSDNILQLFVSWELVGLCSYLLIGFWFEKPSAAAAAKKAFLTTRIGDVMFLTGIIVLTSDLLKVSGGFQDGVYLLRFDEIFSYIPELAALQINILGFEISHLTIITLLFFGGAVGKSGQFPLHVWLPDAMEGPTTVSALIHAATMVTAGVYLVARTFPMFIAAPDSLMVVAYFGGFTALFAGTMGIVMNDLKRVLAFSTISQLGYMMLGLGLGTAIGLEAVGISLFHLINHAFFKALLFLCAGSVIHAVGTQDMRELGGVGKVMPITAATMTIAALALAGFGIPGTSIGTSGFMSKDPIIEAAYLFGEHSSNWIPYVFSILAALLTSIYIFRLIFMTFTGKPRSNYHGHESPAIMTIPLSILAIFALAFGALTRTGFMEFLEETFTNSFVNLDIGALAGIGENELVAAAGHEPLAVLWPPVIVALAGFAIAFVIYYLRAFSLGPLASMKNPIYRLLYNRYYQHQIYTEFFSIGIVYGIIAFLTQVVDVIIDSVVEGIGIVTVFVGEELRKIQTGVVQTYATALIAGVSLLIILVKLIMEVL.

16 consecutive transmembrane segments (helical) span residues 8 to 28 (EFAF…FFFG), 37 to 57 (IVPI…TLGL), 79 to 99 (ILID…SLLI), 136 to 156 (ILQL…LIGF), 179 to 199 (VMFL…SGGF), 225 to 245 (ILGF…GGAV), 265 to 285 (TTVS…YLVA), 298 to 318 (LMVV…MGIV), 337 to 357 (MMLG…ISLF), 360 to 380 (INHA…IHAV), 394 to 414 (VMPI…GFGI), 447 to 467 (YVFS…LIFM), 483 to 503 (PAIM…FGAL), 545 to 565 (LAVL…AFVI), 601 to 621 (FSIG…DVII), and 652 to 672 (TALI…MEVL).

This sequence belongs to the complex I subunit 5 family. The FPO complex is composed of at least 13 different subunits. FpoA, FpoH, FpoJ, FpoK, FpoL, FpoM and FpoN proteins constitute the membrane sector of the complex.

The protein resides in the cell membrane. The enzyme catalyses methanophenazine + reduced coenzyme F420-(gamma-L-Glu)(n) = dihydromethanophenazine + oxidized coenzyme F420-(gamma-L-Glu)(n) + H(+). In terms of biological role, component of the F(420)H(2) dehydrogenase (FPO complex) which is part of the energy-conserving F(420)H(2):heterodisulfide oxidoreductase system. The membrane-bound electron transfer system of the complex plays an important role in the metabolism of methylotrophic methanogens when the organisms grow on methanol or methylamines. Catalyzes the oxidation of methanophenazine to dihydromethanophenazine. It shuttles electrons from F(420)H(2), via FAD and iron-sulfur (Fe-S) centers, to methanophenazine (an electron carrier in the membrane). It couples the redox reaction to proton translocation (for every two electrons transferred, two hydrogen ions are translocated across the cytoplasmic membrane), and thus conserves the redox energy in a proton gradient. It also catalyzes the oxidation of F(420)H(2) with quinones such as 2,3-dimethyl-1,4-naphthoquinone, 2-methyl-1,4-naphthoquinone and tetramethyl-p-benzoquinone. This is F(420)H(2) dehydrogenase subunit L (fpoL) from Methanosarcina mazei (strain ATCC BAA-159 / DSM 3647 / Goe1 / Go1 / JCM 11833 / OCM 88) (Methanosarcina frisia).